The following is a 547-amino-acid chain: CTP synthase (547 aa).

The segment at 1 to 265 (MARFIFITGG…DQAVLDAFQI (265 aa)) is amidoligase domain. Ser-13 lines the CTP pocket. Ser-13 is a binding site for UTP. ATP-binding positions include 14–19 (SLGKGL) and Asp-71. 2 residues coordinate Mg(2+): Asp-71 and Glu-139. CTP contacts are provided by residues 146 to 148 (DIE), 186 to 191 (KTKPTQ), and Lys-222. Residues 186–191 (KTKPTQ) and Lys-222 contribute to the UTP site. A Glutamine amidotransferase type-1 domain is found at 291 to 546 (KIAIVGKYVQ…VRAAKESSRL (256 aa)). Gly-353 contacts L-glutamine. Cys-380 functions as the Nucleophile; for glutamine hydrolysis in the catalytic mechanism. L-glutamine contacts are provided by residues 381–384 (LGMQ), Glu-404, and Arg-474. Active-site residues include His-519 and Glu-521.

Belongs to the CTP synthase family. Homotetramer.

The catalysed reaction is UTP + L-glutamine + ATP + H2O = CTP + L-glutamate + ADP + phosphate + 2 H(+). It catalyses the reaction L-glutamine + H2O = L-glutamate + NH4(+). It carries out the reaction UTP + NH4(+) + ATP = CTP + ADP + phosphate + 2 H(+). It functions in the pathway pyrimidine metabolism; CTP biosynthesis via de novo pathway; CTP from UDP: step 2/2. With respect to regulation, allosterically activated by GTP, when glutamine is the substrate; GTP has no effect on the reaction when ammonia is the substrate. The allosteric effector GTP functions by stabilizing the protein conformation that binds the tetrahedral intermediate(s) formed during glutamine hydrolysis. Inhibited by the product CTP, via allosteric rather than competitive inhibition. Its function is as follows. Catalyzes the ATP-dependent amination of UTP to CTP with either L-glutamine or ammonia as the source of nitrogen. Regulates intracellular CTP levels through interactions with the four ribonucleotide triphosphates. In Ruegeria pomeroyi (strain ATCC 700808 / DSM 15171 / DSS-3) (Silicibacter pomeroyi), this protein is CTP synthase.